Here is a 777-residue protein sequence, read N- to C-terminus: Translation initiation factor IF-2 (777 aa).

Disordered regions lie at residues 30-54 and 98-117; these read SPSMGATIVKKRRRKTHDTEEQDEN and EDSNEKTNDRDSATNTSFKE. Residues 98–109 show a composition bias toward basic and acidic residues; it reads EDSNEKTNDRDS. The region spanning 279-449 is the tr-type G domain; the sequence is PKPPIVTFMG…LLIAELMKLE (171 aa). Positions 288–295 are G1; it reads GHVDHGKT. 288-295 is a GTP binding site; it reads GHVDHGKT. The tract at residues 313-317 is G2; sequence GITQH. The tract at residues 334–337 is G3; it reads DTPG. GTP contacts are provided by residues 334-338 and 388-391; these read DTPGH and NKID. A G4 region spans residues 388–391; it reads NKID. The interval 425 to 427 is G5; it reads SAK.

This sequence belongs to the TRAFAC class translation factor GTPase superfamily. Classic translation factor GTPase family. IF-2 subfamily.

The protein localises to the cytoplasm. Functionally, one of the essential components for the initiation of protein synthesis. Protects formylmethionyl-tRNA from spontaneous hydrolysis and promotes its binding to the 30S ribosomal subunits. Also involved in the hydrolysis of GTP during the formation of the 70S ribosomal complex. The polypeptide is Translation initiation factor IF-2 (Wolbachia sp. subsp. Brugia malayi (strain TRS)).